The primary structure comprises 95 residues: FXYD domain-containing ion transport regulator 6 (95 aa).

The N-terminal stretch at 1–18 (MEVVLLFLCGLLAPAVLA) is a signal peptide. Residues 19 to 35 (SATEQEKEKDPFHYDYQ) are Extracellular-facing. A helical membrane pass occupies residues 36 to 58 (TLRIGGLVFAVVLFSVGILLILS). Topologically, residues 59-95 (RRCKCSFNQKPRAPGDEEAQVENLVTANATEPQKAEN) are cytoplasmic. The segment at 69–95 (PRAPGDEEAQVENLVTANATEPQKAEN) is disordered.

Belongs to the FXYD family. Regulatory subunit of the sodium/potassium-transporting ATPase which is composed of a catalytic alpha subunit, a non-catalytic beta subunit and an additional regulatory subunit. The regulatory subunit, a member of the FXYD protein family, modulates the enzymatic activity in a tissue- and isoform-specific way by changing affinities of the Na+/K+-ATPase toward Na(+), K(+) or ATP.

It localises to the cell membrane. Associates with and regulates the activity of the sodium/potassium-transporting ATPase (NKA) which catalyzes the hydrolysis of ATP coupled with the exchange of Na(+) and K(+) ions across the plasma membrane. Reduces the apparent affinity for intracellular Na(+) with no change in the apparent affinity for extracellular K(+). In addition to modulating NKA kinetics, may also function as a regulator of NKA localization to the plasma membrane. The chain is FXYD domain-containing ion transport regulator 6 (FXYD6) from Bos taurus (Bovine).